Consider the following 570-residue polypeptide: Proline--tRNA ligase (570 aa).

The protein belongs to the class-II aminoacyl-tRNA synthetase family. ProS type 1 subfamily. Homodimer.

The protein localises to the cytoplasm. The enzyme catalyses tRNA(Pro) + L-proline + ATP = L-prolyl-tRNA(Pro) + AMP + diphosphate. Its function is as follows. Catalyzes the attachment of proline to tRNA(Pro) in a two-step reaction: proline is first activated by ATP to form Pro-AMP and then transferred to the acceptor end of tRNA(Pro). As ProRS can inadvertently accommodate and process non-cognate amino acids such as alanine and cysteine, to avoid such errors it has two additional distinct editing activities against alanine. One activity is designated as 'pretransfer' editing and involves the tRNA(Pro)-independent hydrolysis of activated Ala-AMP. The other activity is designated 'posttransfer' editing and involves deacylation of mischarged Ala-tRNA(Pro). The misacylated Cys-tRNA(Pro) is not edited by ProRS. The sequence is that of Proline--tRNA ligase from Shewanella sp. (strain MR-4).